Consider the following 407-residue polypeptide: Tyrosine--tRNA ligase 1 (407 aa).

Tyr-35 contacts L-tyrosine. Residues 40–49 (PTGDSLHVGH) carry the 'HIGH' region motif. L-tyrosine-binding residues include Tyr-168 and Gln-172. A 'KMSKS' region motif is present at residues 228 to 232 (KMGKT). Residue Lys-231 coordinates ATP. In terms of domain architecture, S4 RNA-binding spans 340–406 (SSILDVLVHT…GKKKYYKIVI (67 aa)).

The protein belongs to the class-I aminoacyl-tRNA synthetase family. TyrS type 1 subfamily. In terms of assembly, homodimer.

It localises to the cytoplasm. The catalysed reaction is tRNA(Tyr) + L-tyrosine + ATP = L-tyrosyl-tRNA(Tyr) + AMP + diphosphate + H(+). Its function is as follows. Catalyzes the attachment of tyrosine to tRNA(Tyr) in a two-step reaction: tyrosine is first activated by ATP to form Tyr-AMP and then transferred to the acceptor end of tRNA(Tyr). In Clostridium acetobutylicum (strain ATCC 824 / DSM 792 / JCM 1419 / IAM 19013 / LMG 5710 / NBRC 13948 / NRRL B-527 / VKM B-1787 / 2291 / W), this protein is Tyrosine--tRNA ligase 1.